The following is a 188-amino-acid chain: Elongation factor P (188 aa).

K34 carries the post-translational modification N6-(3,6-diaminohexanoyl)-5-hydroxylysine.

The protein belongs to the elongation factor P family. Post-translationally, may be beta-lysylated on the epsilon-amino group of Lys-34 by the combined action of EpmA and EpmB, and then hydroxylated on the C5 position of the same residue by EpmC (if this protein is present). Lysylation is critical for the stimulatory effect of EF-P on peptide-bond formation. The lysylation moiety may extend toward the peptidyltransferase center and stabilize the terminal 3-CCA end of the tRNA. Hydroxylation of the C5 position on Lys-34 may allow additional potential stabilizing hydrogen-bond interactions with the P-tRNA.

It is found in the cytoplasm. The protein operates within protein biosynthesis; polypeptide chain elongation. Involved in peptide bond synthesis. Alleviates ribosome stalling that occurs when 3 or more consecutive Pro residues or the sequence PPG is present in a protein, possibly by augmenting the peptidyl transferase activity of the ribosome. Modification of Lys-34 is required for alleviation. The polypeptide is Elongation factor P (Aliivibrio fischeri (strain ATCC 700601 / ES114) (Vibrio fischeri)).